A 321-amino-acid chain; its full sequence is MASNSIKIFAGNSHPELAEKVARRIGLSLGKVAVVQYSNRETSVTIGESVRDEDVFILQTGCGSINDHLMELLIMINACRSASARRITAIIPCFPYARQDKKDKSRAPITARLVANMLQTAGCNHIITMDLHASQIQGFFNVPVDNLYAEPSVLRYIRENIDTTVNPTVIVSPDAGGAKRATALADRLDLDFALIHKERQKANEVSRMVLVGDVRDKLAILVDDMADTCGTLGLAAKTLKDNGAKAVYAIVTHGILSGKAIKVINESALEKVIVTNTIPHDDKRSLCSKIETIDISGVLAECIRRIHHGESVSVLFSVAPA.

Residues Asp-130, His-132, and Asp-145 each contribute to the Mg(2+) site. Ser-172 is subject to Phosphoserine.

Belongs to the ribose-phosphate pyrophosphokinase family.

The protein localises to the cytoplasm. The enzyme catalyses D-ribose 5-phosphate + ATP = 5-phospho-alpha-D-ribose 1-diphosphate + AMP + H(+). The protein operates within metabolic intermediate biosynthesis; 5-phospho-alpha-D-ribose 1-diphosphate biosynthesis; 5-phospho-alpha-D-ribose 1-diphosphate from D-ribose 5-phosphate (route I): step 1/1. Its function is as follows. 5-phosphoribose 1-diphosphate synthase involved in nucleotide, histidine, and tryptophan biosynthesis. Active in heteromultimeric complexes with other 5-phosphoribose 1-diphosphate synthases. This chain is Ribose-phosphate pyrophosphokinase 2, found in Schizosaccharomyces pombe (strain 972 / ATCC 24843) (Fission yeast).